The following is a 351-amino-acid chain: Thiamine-phosphate synthase (351 aa).

The interval 1 to 128 is unknown; it reads MKNPNIIQPE…SKIASEIRYE (128 aa). The interval 129 to 351 is thiamine-phosphate synthase; that stretch reads IYTLEIEILN…IIIKELSHEN (223 aa). Residues 180–184 and Asn-212 contribute to the 4-amino-2-methyl-5-(diphosphooxymethyl)pyrimidine site; that span reads QHRFK. Mg(2+) contacts are provided by Asn-213 and Asp-232. Ser-251 is a 4-amino-2-methyl-5-(diphosphooxymethyl)pyrimidine binding site. 277–279 serves as a coordination point for 2-[(2R,5Z)-2-carboxy-4-methylthiazol-5(2H)-ylidene]ethyl phosphate; that stretch reads TLT. Residue Lys-280 coordinates 4-amino-2-methyl-5-(diphosphooxymethyl)pyrimidine. Residues Gly-307 and 327 to 328 contribute to the 2-[(2R,5Z)-2-carboxy-4-methylthiazol-5(2H)-ylidene]ethyl phosphate site; that span reads VS.

It belongs to the thiamine-phosphate synthase family.

It catalyses the reaction 2-[(2R,5Z)-2-carboxy-4-methylthiazol-5(2H)-ylidene]ethyl phosphate + 4-amino-2-methyl-5-(diphosphooxymethyl)pyrimidine + 2 H(+) = thiamine phosphate + CO2 + diphosphate. The catalysed reaction is 2-(2-carboxy-4-methylthiazol-5-yl)ethyl phosphate + 4-amino-2-methyl-5-(diphosphooxymethyl)pyrimidine + 2 H(+) = thiamine phosphate + CO2 + diphosphate. The enzyme catalyses 4-methyl-5-(2-phosphooxyethyl)-thiazole + 4-amino-2-methyl-5-(diphosphooxymethyl)pyrimidine + H(+) = thiamine phosphate + diphosphate. Its pathway is cofactor biosynthesis; thiamine diphosphate biosynthesis; thiamine phosphate from 4-amino-2-methyl-5-diphosphomethylpyrimidine and 4-methyl-5-(2-phosphoethyl)-thiazole: step 1/1. Condenses 4-methyl-5-(beta-hydroxyethyl)thiazole monophosphate (THZ-P) and 2-methyl-4-amino-5-hydroxymethyl pyrimidine pyrophosphate (HMP-PP) to form thiamine monophosphate (TMP). This is Thiamine-phosphate synthase from Prochlorococcus marinus subsp. pastoris (strain CCMP1986 / NIES-2087 / MED4).